A 250-amino-acid polypeptide reads, in one-letter code: Pyridoxine 5'-phosphate synthase (250 aa).

3-amino-2-oxopropyl phosphate contacts are provided by Asn8 and Arg19. Residue His44 is the Proton acceptor of the active site. Residues Arg46 and His51 each contribute to the 1-deoxy-D-xylulose 5-phosphate site. The active-site Proton acceptor is the Glu76. Thr106 contacts 1-deoxy-D-xylulose 5-phosphate. His200 serves as the catalytic Proton donor. 3-amino-2-oxopropyl phosphate-binding positions include Asp201 and 223–224 (GH).

It belongs to the PNP synthase family. Homooctamer; tetramer of dimers.

Its subcellular location is the cytoplasm. The catalysed reaction is 3-amino-2-oxopropyl phosphate + 1-deoxy-D-xylulose 5-phosphate = pyridoxine 5'-phosphate + phosphate + 2 H2O + H(+). It participates in cofactor biosynthesis; pyridoxine 5'-phosphate biosynthesis; pyridoxine 5'-phosphate from D-erythrose 4-phosphate: step 5/5. In terms of biological role, catalyzes the complicated ring closure reaction between the two acyclic compounds 1-deoxy-D-xylulose-5-phosphate (DXP) and 3-amino-2-oxopropyl phosphate (1-amino-acetone-3-phosphate or AAP) to form pyridoxine 5'-phosphate (PNP) and inorganic phosphate. The polypeptide is Pyridoxine 5'-phosphate synthase (Rhizobium meliloti (strain 1021) (Ensifer meliloti)).